Here is a 296-residue protein sequence, read N- to C-terminus: Protein FAM221A (296 aa).

The interval 235–263 (MQPPSTSSPQPLAVGPSTQISSLRKPEED) is disordered. The segment covering 237-256 (PPSTSSPQPLAVGPSTQISS) has biased composition (polar residues).

The protein belongs to the FAM221 family.

The chain is Protein FAM221A (Fam221a) from Rattus norvegicus (Rat).